The primary structure comprises 709 residues: Elongation factor G (709 aa).

The 288-residue stretch at 9–296 (AKVRNIGIMA…AVVRYLPSPL (288 aa)) folds into the tr-type G domain. GTP-binding positions include 18 to 25 (AHIDAGKT), 86 to 90 (DTPGH), and 140 to 143 (NKLD).

It belongs to the TRAFAC class translation factor GTPase superfamily. Classic translation factor GTPase family. EF-G/EF-2 subfamily.

It localises to the cytoplasm. Catalyzes the GTP-dependent ribosomal translocation step during translation elongation. During this step, the ribosome changes from the pre-translocational (PRE) to the post-translocational (POST) state as the newly formed A-site-bound peptidyl-tRNA and P-site-bound deacylated tRNA move to the P and E sites, respectively. Catalyzes the coordinated movement of the two tRNA molecules, the mRNA and conformational changes in the ribosome. This chain is Elongation factor G, found in Streptomyces griseus subsp. griseus (strain JCM 4626 / CBS 651.72 / NBRC 13350 / KCC S-0626 / ISP 5235).